The primary structure comprises 384 residues: MGLLCSKSNRYNDAKAEENAQTAEIERRIELETKAEKHIRKLLLLGAGESGKSTIFKQIKLLFQTGFDEAELKSYLPVVHANVYQTIKLLHDGSKEFAQNDVDFSKYVISTENKDIGEKLSEIGGRLDYPRLTKELAQEIESIWKDAAIQETYARGNELQVPDCTHYFMENLQRLSDANYVPTKEDVLLARVRTTGVVEIQFSPVGENKKSGEVYRLFDVGGQRNERRKWIHLFEGVSAVIFCVAISEYDQTLFEDENKNRMMETKELFEWVLKQQCFEKTSFMLFLNKFDIFEKKILDVPLNVCEWFKDYQPVSTGKQEIEHAYEFVKKKFEESYFQSTAPDSVDRVFKIYRTTALDQKVVKKTFKLVDETLRRRNLFEAGLL.

Residue G2 is the site of N-myristoyl glycine attachment. A lipid anchor (S-palmitoyl cysteine) is attached at C5. The 347-residue stretch at H38–L384 folds into the G-alpha domain. A G1 motif region spans residues K41 to T54. The GTP site is built by E49, S50, G51, K52, S53, T54, D163, L188, T194, G222, N288, K289, D291, and A356. Residue S53 participates in Mg(2+) binding. Residues D186–T194 are G2 motif. T194 serves as a coordination point for Mg(2+). The tract at residues Y215–R224 is G3 motif. The interval M284–D291 is G4 motif. Residues T354–Q359 are G5 motif.

Belongs to the G-alpha family. G proteins are composed of 3 units; alpha, beta and gamma. The alpha chain contains the guanine nucleotide binding site. Mg(2+) is required as a cofactor.

Its function is as follows. Guanine nucleotide-binding proteins (G proteins) are involved as modulators or transducers in various transmembrane signaling systems. This chain is Guanine nucleotide-binding protein alpha-1 subunit (GPA1), found in Pisum sativum (Garden pea).